The following is a 131-amino-acid chain: Small ribosomal subunit protein uS8 (131 aa).

The protein belongs to the universal ribosomal protein uS8 family. As to quaternary structure, part of the 30S ribosomal subunit. Contacts proteins S5 and S12.

One of the primary rRNA binding proteins, it binds directly to 16S rRNA central domain where it helps coordinate assembly of the platform of the 30S subunit. The protein is Small ribosomal subunit protein uS8 of Bacteroides fragilis (strain ATCC 25285 / DSM 2151 / CCUG 4856 / JCM 11019 / LMG 10263 / NCTC 9343 / Onslow / VPI 2553 / EN-2).